A 447-amino-acid polypeptide reads, in one-letter code: DNA primase DnaG (447 aa).

Residues 200–274 (DSIIVVEGRA…DIDYVARAPE (75 aa)) form the Toprim domain. 3 residues coordinate Mg(2+): Glu-206, Asp-248, and Asp-250. A disordered region spans residues 316–339 (ERRRGGARKQEYTKKGSLNPQPQV).

Belongs to the archaeal DnaG primase family. Forms a ternary complex with MCM helicase and DNA. Component of the archaeal exosome complex. It depends on Mg(2+) as a cofactor.

The enzyme catalyses ssDNA + n NTP = ssDNA/pppN(pN)n-1 hybrid + (n-1) diphosphate.. In terms of biological role, RNA polymerase that catalyzes the synthesis of short RNA molecules used as primers for DNA polymerase during DNA replication. Also part of the exosome, which is a complex involved in RNA degradation. Acts as a poly(A)-binding protein that enhances the interaction between heteromeric, adenine-rich transcripts and the exosome. The polypeptide is DNA primase DnaG (Pyrococcus furiosus (strain ATCC 43587 / DSM 3638 / JCM 8422 / Vc1)).